The sequence spans 205 residues: Holliday junction branch migration complex subunit RuvA (205 aa).

Residues 1–64 are domain I; that stretch reads MIGKLKGTID…EDQLKLFGFM (64 aa). Positions 65 to 143 are domain II; sequence SALEREWFNL…AFTGDAGSAI (79 aa). A flexible linker region spans residues 144 to 153; the sequence is GLKQELGEGV. The domain III stretch occupies residues 153–205; that stretch reads VASAPVSDAVSALTNLGYSRDQAANAIAAALKNGGEGADSAKLIRLGLKELSR.

This sequence belongs to the RuvA family. As to quaternary structure, homotetramer. Forms an RuvA(8)-RuvB(12)-Holliday junction (HJ) complex. HJ DNA is sandwiched between 2 RuvA tetramers; dsDNA enters through RuvA and exits via RuvB. An RuvB hexamer assembles on each DNA strand where it exits the tetramer. Each RuvB hexamer is contacted by two RuvA subunits (via domain III) on 2 adjacent RuvB subunits; this complex drives branch migration. In the full resolvosome a probable DNA-RuvA(4)-RuvB(12)-RuvC(2) complex forms which resolves the HJ.

The protein localises to the cytoplasm. The RuvA-RuvB-RuvC complex processes Holliday junction (HJ) DNA during genetic recombination and DNA repair, while the RuvA-RuvB complex plays an important role in the rescue of blocked DNA replication forks via replication fork reversal (RFR). RuvA specifically binds to HJ cruciform DNA, conferring on it an open structure. The RuvB hexamer acts as an ATP-dependent pump, pulling dsDNA into and through the RuvAB complex. HJ branch migration allows RuvC to scan DNA until it finds its consensus sequence, where it cleaves and resolves the cruciform DNA. The sequence is that of Holliday junction branch migration complex subunit RuvA from Allorhizobium ampelinum (strain ATCC BAA-846 / DSM 112012 / S4) (Agrobacterium vitis (strain S4)).